The chain runs to 723 residues: Preterminal protein (723 aa).

Residues 453-462 carry the Nuclear localization signal motif; that stretch reads RLPMRRRRRR. Residues 457-492 form a disordered region; sequence RRRRRRAPPPPPMSEELSEPEVEAFPPASPPRRSFE. Position 651 is an O-(5'-phospho-DNA)-serine (serine 651).

This sequence belongs to the adenoviridae terminal protein family. Heterodimer with the polymerase; this heterodimer binds to bp 9 to 18 of the genome. Interacts with host POU2F1; POU2F1 binds to the auxiliary sequences in the inverted terminal repeats and tethers the pTP-POL heterodimer to the origin DNA thereby participating in the assembly of the pre-initiation complex (POL-TP-DBP-NFIA-POU2F1). Preterminal protein is used to replicate viral genome, upon genomic encapsidation it is processed first into iTP and finally into TP by adenovirus protease.

The protein localises to the host nucleus matrix. In terms of biological role, protein covalently bound to the viral DNA that acts as a primer for viral genomic replication by DNA strand displacement. Assembles on the viral origin of replication in an initiation complex with viral polymerase, DBP, host NFIA and host POU2F1/OCT1. During initiation, the polymerase covalently couples the first dCTP with Ser-580 of pTP. The terminal protein stimulates the template activity over 20 fold compared to protein-free templates. Neo-synthesized viral genomes are linked to two preterminal proteins, one for each 5' end. These new genomes are encapsidated in the nucleus, and during capsid maturation by viral protease, preterminal protein is first cleaved into intermediary (iTP), then into mature TP. May play a role in host nuclear matrix localization of genomic DNA. The polypeptide is Preterminal protein (Canis lupus familiaris (Dog)).